Consider the following 122-residue polypeptide: uncharacterized protein (122 aa).

The Cytoplasmic segment spans residues 1-24; it reads MKNRKFSNLLLLRLRILCFNKKPA. A helical transmembrane segment spans residues 25–45; it reads FAATSYAFFFRNFSVLIFIMV. Residues 46-57 lie on the Extracellular side of the membrane; the sequence is PDEKENGAAADN. The chain crosses the membrane as a helical span at residues 58-78; the sequence is SFSLLIGRGVVLFLFYCPTAL. At 79–122 the chain is on the cytoplasmic side; that stretch reads KMHGPVPAHWFCDKNIEAIQSDGQIRLLRSGPFPWSHGTCIRGA.

It is found in the membrane. This is an uncharacterized protein from Saccharomyces cerevisiae (strain ATCC 204508 / S288c) (Baker's yeast).